We begin with the raw amino-acid sequence, 290 residues long: HTH-type transcriptional activator RhaR (290 aa).

The 99-residue stretch at 179–277 (DLIMSALQQS…GMTPRDYRQR (99 aa)) folds into the HTH araC/xylS-type domain. DNA-binding regions (H-T-H motif) lie at residues 196–217 (ADFCHKNQLVERSLKQLFRQQT) and 244–267 (ISDIAARCGFEDSNYFSAVFTREA).

As to quaternary structure, binds DNA as a dimer.

The protein localises to the cytoplasm. Functionally, activates expression of the rhaSR operon in response to L-rhamnose. In Yersinia pseudotuberculosis serotype O:1b (strain IP 31758), this protein is HTH-type transcriptional activator RhaR.